We begin with the raw amino-acid sequence, 85 residues long: Toxin BmKaTX15 (85 aa).

Positions Met-1–Ser-19 are cleaved as a signal peptide. Residues Arg-21–Asn-83 form the LCN-type CS-alpha/beta domain. Intrachain disulfides connect Cys-31–Cys-82, Cys-35–Cys-55, Cys-41–Cys-65, and Cys-45–Cys-67.

Belongs to the long (4 C-C) scorpion toxin superfamily. Sodium channel inhibitor family. Alpha subfamily. In terms of tissue distribution, expressed by the venom gland.

It is found in the secreted. In terms of biological role, alpha toxins bind voltage-independently at site-3 of sodium channels (Nav) and inhibit the inactivation of the activated channels, thereby blocking neuronal transmission. The protein is Toxin BmKaTX15 of Olivierus martensii (Manchurian scorpion).